We begin with the raw amino-acid sequence, 311 residues long: Pyrimidine-specific ribonucleoside hydrolase RihA (311 aa).

The active site involves H240.

This sequence belongs to the IUNH family. RihA subfamily.

Functionally, hydrolyzes with equal efficiency cytidine or uridine to ribose and cytosine or uracil, respectively. The protein is Pyrimidine-specific ribonucleoside hydrolase RihA of Escherichia coli O9:H4 (strain HS).